The sequence spans 78 residues: Conotoxin ArMKLT2-0312 (78 aa).

The first 22 residues, 1-22 (MKLTCVLIIAVLFLTACQLITA), serve as a signal peptide directing secretion. Residues 23–45 (DYSRDKQEYRAVRLRDAMRYSRV) constitute a propeptide that is removed on maturation. Residue Gln-48 is modified to Pyrrolidone carboxylic acid. Disulfide bonds link Cys-49/Cys-62, Cys-56/Cys-67, and Cys-61/Cys-75.

It belongs to the conotoxin O1 superfamily. In terms of tissue distribution, expressed by the venom duct.

It localises to the secreted. The sequence is that of Conotoxin ArMKLT2-0312 from Conus arenatus (Sand-dusted cone).